The chain runs to 331 residues: Ketol-acid reductoisomerase (NADP(+)) (331 aa).

The 181-residue stretch at alanine 2–threonine 182 folds into the KARI N-terminal Rossmann domain. Residues phenylalanine 25–glutamine 28, serine 51, serine 53, and aspartate 83–glutamine 86 contribute to the NADP(+) site. The active site involves histidine 108. Residue glycine 134 coordinates NADP(+). The 146-residue stretch at threonine 183–isoleucine 328 folds into the KARI C-terminal knotted domain. Mg(2+)-binding residues include aspartate 191, glutamate 195, glutamate 227, and glutamate 231. Serine 252 contributes to the substrate binding site.

It belongs to the ketol-acid reductoisomerase family. Requires Mg(2+) as cofactor.

The enzyme catalyses (2R)-2,3-dihydroxy-3-methylbutanoate + NADP(+) = (2S)-2-acetolactate + NADPH + H(+). The catalysed reaction is (2R,3R)-2,3-dihydroxy-3-methylpentanoate + NADP(+) = (S)-2-ethyl-2-hydroxy-3-oxobutanoate + NADPH + H(+). The protein operates within amino-acid biosynthesis; L-isoleucine biosynthesis; L-isoleucine from 2-oxobutanoate: step 2/4. Its pathway is amino-acid biosynthesis; L-valine biosynthesis; L-valine from pyruvate: step 2/4. Involved in the biosynthesis of branched-chain amino acids (BCAA). Catalyzes an alkyl-migration followed by a ketol-acid reduction of (S)-2-acetolactate (S2AL) to yield (R)-2,3-dihydroxy-isovalerate. In the isomerase reaction, S2AL is rearranged via a Mg-dependent methyl migration to produce 3-hydroxy-3-methyl-2-ketobutyrate (HMKB). In the reductase reaction, this 2-ketoacid undergoes a metal-dependent reduction by NADPH to yield (R)-2,3-dihydroxy-isovalerate. The sequence is that of Ketol-acid reductoisomerase (NADP(+)) from Thermoanaerobacter pseudethanolicus (strain ATCC 33223 / 39E) (Clostridium thermohydrosulfuricum).